The chain runs to 168 residues: uncharacterized protein (168 aa).

Disordered regions lie at residues 1–81 (MSSA…GRSW) and 119–150 (RDLS…STVA). A compositionally biased stretch (low complexity) spans 7-34 (SRTSRSKATGASSSSISSSIRASPSSSS). The segment covering 43–67 (TRRRRRRTGRRSTKRSIISPRRRRM) has biased composition (basic residues). Residues 123–146 (ESASTGSENLSRKASNQSQSQGRL) show a composition bias toward polar residues.

This is an uncharacterized protein from Human adenovirus C serotype 2 (HAdV-2).